Reading from the N-terminus, the 187-residue chain is Proenkephalin-A (187 aa).

4 consecutive propeptides follow at residues 52 to 70 (MDELYPQEPEEEAPAEILA), 80 to 143 (DAEE…KMLQ), 153 to 163 (VGRPEWWMDYQ), and 173 to 187 (FADSLPSDEEGESYS). A disordered region spans residues 81 to 132 (AEEEEDALASSSDLLKELLGPGETETAAAPRGRDDEDVSKSHGGFMRALKGS). A compositionally biased stretch (low complexity) spans 88–99 (LASSSDLLKELL). Residues 111–120 (RGRDDEDVSK) show a composition bias toward basic and acidic residues. A Phosphoserine modification is found at Ser187.

The protein belongs to the opioid neuropeptide precursor family. Processed and degraded by ACE. In terms of processing, the N-terminal domain contains 6 conserved cysteines thought to be involved in disulfide bonding and/or processing. Post-translationally, proenkephalin-A is cleaved by CTSL to generate Met-enkephalin.

It is found in the cytoplasmic vesicle. The protein localises to the secretory vesicle. The protein resides in the chromaffin granule lumen. Its subcellular location is the secreted. Functionally, neuropeptide that competes with and mimic the effects of opiate drugs. They play a role in a number of physiologic functions, including pain perception and responses to stress. This chain is Proenkephalin-A (PENK), found in Felis catus (Cat).